The chain runs to 245 residues: tRNA pseudouridine synthase A (245 aa).

Residue Asp-52 is the Nucleophile of the active site. A substrate-binding site is contributed by Tyr-111.

Belongs to the tRNA pseudouridine synthase TruA family. In terms of assembly, homodimer.

It carries out the reaction uridine(38/39/40) in tRNA = pseudouridine(38/39/40) in tRNA. Functionally, formation of pseudouridine at positions 38, 39 and 40 in the anticodon stem and loop of transfer RNAs. The polypeptide is tRNA pseudouridine synthase A (Thermotoga petrophila (strain ATCC BAA-488 / DSM 13995 / JCM 10881 / RKU-1)).